A 337-amino-acid polypeptide reads, in one-letter code: Glyceraldehyde-3-phosphate dehydrogenase (337 aa).

Residues 13 to 14, Asp35, and Arg80 contribute to the NAD(+) site; that span reads RI. Residues 150–152, Thr181, 210–211, and Arg233 each bind D-glyceraldehyde 3-phosphate; these read SCT and TG. Cys151 acts as the Nucleophile in catalysis. Asn315 lines the NAD(+) pocket.

It belongs to the glyceraldehyde-3-phosphate dehydrogenase family. As to quaternary structure, homotetramer.

It localises to the cytoplasm. It catalyses the reaction D-glyceraldehyde 3-phosphate + phosphate + NAD(+) = (2R)-3-phospho-glyceroyl phosphate + NADH + H(+). It participates in carbohydrate degradation; glycolysis; pyruvate from D-glyceraldehyde 3-phosphate: step 1/5. The chain is Glyceraldehyde-3-phosphate dehydrogenase (GPDA) from Colletotrichum lindemuthianum (Bean anthracnose fungus).